A 447-amino-acid polypeptide reads, in one-letter code: MSMTPREIVHELNRHIIGQDDAKRAVAIALRNRWRRMQLPAELRQEVTPKNILMIGPTGVGKTEIARRLAKLANAPFLKVEATKFTEVGYVGRDVESIIRDLADAALKMLREQEVHKMRHRAEDAAEERILDALLPPARPVGFSEEPVQSGDSNTRQLFRKRLREGQLDDKEIDIEVAESPAGVEIMAPPGMEEMTNQLQNLFANMGKGKKKSRKLKIKEAFKLIRDEEAARLVNEEDLKARALEAVEQNGIVFIDEIDKVAKRGNTSGADVSREGVQRDLLPLIEGSTVNTKLGMVKTDHILFIASGAFHLSKPSDLVPELQGRLPIRVELKALSPQDFERILTEPHAALTEQYRELLKTEGLHIEFLEDGIKRIAEIAWQVNEKTENIGARRLHTLLERLLEEVSFSAADLAGKQQGEPIRIDAAYVNEHLGELAQDEDLSRYIL.

ATP-binding positions include I17, 59–64 (GVGKTE), D256, E321, and R393.

This sequence belongs to the ClpX chaperone family. HslU subfamily. As to quaternary structure, a double ring-shaped homohexamer of HslV is capped on each side by a ring-shaped HslU homohexamer. The assembly of the HslU/HslV complex is dependent on binding of ATP.

It localises to the cytoplasm. Functionally, ATPase subunit of a proteasome-like degradation complex; this subunit has chaperone activity. The binding of ATP and its subsequent hydrolysis by HslU are essential for unfolding of protein substrates subsequently hydrolyzed by HslV. HslU recognizes the N-terminal part of its protein substrates and unfolds these before they are guided to HslV for hydrolysis. This is ATP-dependent protease ATPase subunit HslU from Stutzerimonas stutzeri (strain A1501) (Pseudomonas stutzeri).